A 743-amino-acid polypeptide reads, in one-letter code: 1,4-alpha-glucan branching enzyme GlgB (743 aa).

Asp423 acts as the Nucleophile in catalysis. Glu476 (proton donor) is an active-site residue.

It belongs to the glycosyl hydrolase 13 family. GlgB subfamily. Monomer.

It carries out the reaction Transfers a segment of a (1-&gt;4)-alpha-D-glucan chain to a primary hydroxy group in a similar glucan chain.. It participates in glycan biosynthesis; glycogen biosynthesis. In terms of biological role, catalyzes the formation of the alpha-1,6-glucosidic linkages in glycogen by scission of a 1,4-alpha-linked oligosaccharide from growing alpha-1,4-glucan chains and the subsequent attachment of the oligosaccharide to the alpha-1,6 position. In Pseudomonas fluorescens (strain ATCC BAA-477 / NRRL B-23932 / Pf-5), this protein is 1,4-alpha-glucan branching enzyme GlgB.